Here is a 1358-residue protein sequence, read N- to C-terminus: Protein STU1 (1358 aa).

Disordered regions lie at residues 915–950 (FVADSPSDSDNDDTKKNGSDVVDHEEIRDHEESHGF) and 970–990 (QPETVDENVDPMEVDSPDESN). A compositionally biased stretch (basic and acidic residues) spans 926-949 (DDTKKNGSDVVDHEEIRDHEESHG). Over residues 973-990 (TVDENVDPMEVDSPDESN) the composition is skewed to acidic residues.

It belongs to the CLASP family. Interacts with microtubules.

It is found in the cytoplasm. The protein localises to the cytoskeleton. Its subcellular location is the nucleus. The protein resides in the spindle. Its function is as follows. Microtubule binding protein that promotes the stabilization of dynamic microtubules. Required for mitotic spindle formation. This chain is Protein STU1 (STU1), found in Kluyveromyces lactis (strain ATCC 8585 / CBS 2359 / DSM 70799 / NBRC 1267 / NRRL Y-1140 / WM37) (Yeast).